The following is a 200-amino-acid chain: Thymidine kinase (200 aa).

Residues 9–16 (STMNAGKS) and 88–91 (DEAH) each bind ATP. Glu89 acts as the Proton acceptor in catalysis. Positions 146, 148, 183, and 186 each coordinate Zn(2+).

The protein belongs to the thymidine kinase family. Homotetramer.

Its subcellular location is the cytoplasm. The enzyme catalyses thymidine + ATP = dTMP + ADP + H(+). The polypeptide is Thymidine kinase (Rhizobium etli (strain ATCC 51251 / DSM 11541 / JCM 21823 / NBRC 15573 / CFN 42)).